Reading from the N-terminus, the 576-residue chain is MRRVTRTIAAAGAAIACCVTMTACSSPFDLPISGSVQTLAPVEQQTQRVYTNPQGPADDAQPETIVKGFYDAMPAGVQSDGYRVAREFLTGSASAGWNGDSAALVYSGTPDFRRRANTISAPQGAESSLIVEVELQVVGSLDSHGVYTPSNSTQTRRLPYTLMKKSGQWRISSLESGVVISTADFEQVFRQVSVYQVSTSGKQLIPDIRWLSWRNWRTQAVGEVLSDAPSWLEGVLRGAGLSTIKLAVDSVPVKNNVVEIHLNSGINALNEEERGLLVHRIRLTMGDGNAEYALRITGDGVDYSDADANVKLTTEQPTAGVYTLTGGHIVSLASSSPLRVGEAPGYDDARGFVFSSSGGAVLRADGVVECLKSDGASCGVMFSGEPMRSITEGLDGEVWAVSENGRELHVSDGGKETDLKLDWLGAADSIVALAVSPEGCRLALAVEGEDTNGVMMTGVARNGDKTLSGLSKAATQVSVLRHVTMLTFYNDLNLVYATTPPEGNSEQQEAWRQMAPGPANAQRLPNGIITSMASGQISLSRRLAIVDDLGIVRSVSGSLDGSWTIADSQVTALGAQ.

The N-terminal stretch at 1-16 is a signal peptide; the sequence is MRRVTRTIAAAGAAIA. A lipid anchor (N-palmitoyl cysteine) is attached at Cys-17. Cys-17 carries S-diacylglycerol cysteine lipidation.

This sequence belongs to the LpqB lipoprotein family.

Its subcellular location is the cell membrane. This Bifidobacterium longum (strain NCC 2705) protein is Lipoprotein LpqB.